A 904-amino-acid polypeptide reads, in one-letter code: Phosphoenolpyruvate carboxylase (904 aa).

Catalysis depends on residues His-151 and Lys-570.

This sequence belongs to the PEPCase type 1 family. Mg(2+) serves as cofactor.

The enzyme catalyses oxaloacetate + phosphate = phosphoenolpyruvate + hydrogencarbonate. In terms of biological role, forms oxaloacetate, a four-carbon dicarboxylic acid source for the tricarboxylic acid cycle. The polypeptide is Phosphoenolpyruvate carboxylase (Xanthomonas campestris pv. campestris (strain 8004)).